Consider the following 384-residue polypeptide: Succinyl-diaminopimelate desuccinylase (384 aa).

His71 lines the Zn(2+) pocket. The active site involves Asp73. Asp104 contacts Zn(2+). Glu139 functions as the Proton acceptor in the catalytic mechanism. Residues Glu140, Glu168, and His357 each contribute to the Zn(2+) site.

It belongs to the peptidase M20A family. DapE subfamily. In terms of assembly, homodimer. Requires Zn(2+) as cofactor. It depends on Co(2+) as a cofactor.

The enzyme catalyses N-succinyl-(2S,6S)-2,6-diaminopimelate + H2O = (2S,6S)-2,6-diaminopimelate + succinate. The protein operates within amino-acid biosynthesis; L-lysine biosynthesis via DAP pathway; LL-2,6-diaminopimelate from (S)-tetrahydrodipicolinate (succinylase route): step 3/3. Its function is as follows. Catalyzes the hydrolysis of N-succinyl-L,L-diaminopimelic acid (SDAP), forming succinate and LL-2,6-diaminopimelate (DAP), an intermediate involved in the bacterial biosynthesis of lysine and meso-diaminopimelic acid, an essential component of bacterial cell walls. The chain is Succinyl-diaminopimelate desuccinylase from Bradyrhizobium sp. (strain BTAi1 / ATCC BAA-1182).